The following is a 98-amino-acid chain: Class II hydrophobin 1 (98 aa).

An N-terminal signal peptide occupies residues 1 to 16; it reads MQFFTTVVLFAAAAMA. Cystine bridges form between Cys29–Cys79, Cys39–Cys70, Cys40–Cys52, and Cys80–Cys92.

Belongs to the cerato-ulmin hydrophobin family. In terms of assembly, homodimer. Homodimers further self-assemble to form highly ordered films at water-air interfaces through intermolecular interactions. In terms of tissue distribution, expressed in mycelium, conidiating mycelium and aerial hyphae.

It is found in the secreted. The protein resides in the cell wall. Functionally, aerial growth, conidiation, and dispersal of filamentous fungi in the environment rely upon a capability of their secreting small amphipathic proteins called hydrophobins (HPBs) with low sequence identity. Class I can self-assemble into an outermost layer of rodlet bundles on aerial cell surfaces, conferring cellular hydrophobicity that supports fungal growth, development and dispersal; whereas Class II form highly ordered films at water-air interfaces through intermolecular interactions but contribute nothing to the rodlet structure. Hyd1 is a class II hydrophobin that plays probably a role during conidiophore development and in intraspecific signaling or hyphal fusion. Hyd1 and Hyd3 are jointly required for conidial hydrophobicity and dispersal, but seem not to be involved in mycelia hydrophobicity. Inhibits conidial germination in environments not suitable for mycelial growth. Not necessary for root adhesion and colonization. The protein is Class II hydrophobin 1 of Bionectria ochroleuca (Gliocladium roseum).